Consider the following 213-residue polypeptide: Orotidine 5'-phosphate decarboxylase (213 aa).

Substrate-binding positions include Asp-6, Lys-25, 52 to 61, Ser-109, 158 to 168, Gly-181, and Arg-182; these read DLKLADIDNT and PGVGAQGAMIG. The active-site Proton donor is Lys-54.

Belongs to the OMP decarboxylase family. Type 1 subfamily. Homodimer.

It carries out the reaction orotidine 5'-phosphate + H(+) = UMP + CO2. Its pathway is pyrimidine metabolism; UMP biosynthesis via de novo pathway; UMP from orotate: step 2/2. Its function is as follows. Catalyzes the decarboxylation of orotidine 5'-monophosphate (OMP) to uridine 5'-monophosphate (UMP). The chain is Orotidine 5'-phosphate decarboxylase from Sulfurisphaera tokodaii (strain DSM 16993 / JCM 10545 / NBRC 100140 / 7) (Sulfolobus tokodaii).